The chain runs to 384 residues: 8-amino-7-oxononanoate synthase (384 aa).

R21 is a binding site for substrate. G108–F109 contributes to the pyridoxal 5'-phosphate binding site. Substrate is bound at residue H133. Pyridoxal 5'-phosphate is bound by residues S179, H207, and T233. An N6-(pyridoxal phosphate)lysine modification is found at K236. Residue T352 coordinates substrate.

It belongs to the class-II pyridoxal-phosphate-dependent aminotransferase family. BioF subfamily. In terms of assembly, homodimer. It depends on pyridoxal 5'-phosphate as a cofactor.

The catalysed reaction is 6-carboxyhexanoyl-[ACP] + L-alanine + H(+) = (8S)-8-amino-7-oxononanoate + holo-[ACP] + CO2. It participates in cofactor biosynthesis; biotin biosynthesis. Catalyzes the decarboxylative condensation of pimeloyl-[acyl-carrier protein] and L-alanine to produce 8-amino-7-oxononanoate (AON), [acyl-carrier protein], and carbon dioxide. In Escherichia coli O17:K52:H18 (strain UMN026 / ExPEC), this protein is 8-amino-7-oxononanoate synthase.